We begin with the raw amino-acid sequence, 661 residues long: MASPEDENPFQDDPGQEDEDGSILSPRGLEAFSRKVTTTASHLMGPVVDPSSSGHYQSAMTEVQKHLRRPNLQRSMFSMARTTPSDLVRSKLSTREIQHRALAHVPDDMLANIPEDDNNSYSLFQGFQASFPELTDEGKKHRRRVSRGRKLLDEGPTTPENGTTGLQKLRKERASMSHELEMLGIRKNMASSEIREIDIKIANLHGMRRIILERLAALEQEETLLEHDLMEVEARVEDAQMLADEAESTAQQSSPRDTDDADAEDNDGFMSQSIYEKIPSAASTPSKSRKPRIVRRKSMAVLHEHFEPGTSIRELRAHQDCITAMDFDAPFGTLVSAAMDDSVKVWDLNAGRCIGSLEGHTASVRALQVEDNILATGSRDATVRLWDLSKAHYDPHGSHYNGGDDDDDAMAFENPDDQPVDPPAGSMADCPLFTLSSHMDEVTALHFKGDTLVSGSSDKTIRQWDLVKGRCVQTLDVMWAAAQASVSLGTGDGAWRQTARSQAEDADFVGAVQVFDAALACGTADGMVRLWDLRSGQVHRNLVGHTGPVTALQFDNMHLVTGSHDRSIRIWDLRTGSIFDAFAYDHPVTSMMFDARRIVSAAGEDVVKVYDKVESRQWDCGAGIKAAEEMKNPPAIVERVRIRDGYMVEGRRDGIVGIWTC.

A compositionally biased stretch (acidic residues) spans 1–21 (MASPEDENPFQDDPGQEDEDG). Disordered regions lie at residues 1–29 (MASPEDENPFQDDPGQEDEDGSILSPRGL), 135–170 (TDEGKKHRRRVSRGRKLLDEGPTTPENGTTGLQKLR), 244–267 (DEAESTAQQSSPRDTDDADAEDND), and 275–294 (YEKIPSAASTPSKSRKPRIV). Residues 140–149 (KHRRRVSRGR) are compositionally biased toward basic residues. Low complexity predominate over residues 154-165 (EGPTTPENGTTG). Positions 211–254 (ILERLAALEQEETLLEHDLMEVEARVEDAQMLADEAESTAQQSS) form a coiled coil. WD repeat units lie at residues 317 to 358 (AHQD…GSLE) and 359 to 396 (GHTASVRALQVEDNILATGSRDATVRLWDLSKAHYDPH). Residues 397-416 (GSHYNGGDDDDDAMAFENPD) are disordered. Acidic residues predominate over residues 403–416 (GDDDDDAMAFENPD). WD repeat units lie at residues 437–476 (SHMDEVTALHFKGDTLVSGSSDKTIRQWDLVKGRCVQTLD), 478–498 (MWAAAQASVSLGTGDGAWRQT), 499–541 (ARSQ…VHRN), 544–583 (GHTGPVTALQFDNMHLVTGSHDRSIRIWDLRTGSIFDAFA), 585–620 (DHPVTSMMFDARRIVSAAGEDVVKVYDKVESRQWDC), and 622–660 (AGIKAAEEMKNPPAIVERVRIRDGYMVEGRRDGIVGIWT).

Belongs to the WD repeat MDV1/CAF4 family.

It localises to the mitochondrion outer membrane. Involved in mitochondrial fission. Acts as an adapter protein required to form mitochondrial fission complexes. Formation of these complexes is required to promote constriction and fission of the mitochondrial compartment at a late step in mitochondrial division. The polypeptide is Mitochondrial division protein 1 (MDV1) (Pyricularia oryzae (strain 70-15 / ATCC MYA-4617 / FGSC 8958) (Rice blast fungus)).